The following is a 283-amino-acid chain: MNDKFTTASFLESKKQGRKITMLTAYDYPTAKILDEAGVDSILVGDSLGMVVLGYEDTTRVTMDDMVHHTKAVVRGVKRAMVVADMPFLSYHTGKNDSVRNAGRLVSEGGCKAVKLEGGEDIIENVKAIISAGIPVVGHLGYTPQSINVFGGHKAQGKTIDTAKKIYRDALLLQKAGVFAVVLECVPYKLAAFISKRLDIPTIGIGSGPDCDGQVLVIHDLTGMFKDFTPKHVKKYAEIGETVSTAVKSYIDEVKNGVFPTEKNSFKVDDWIIDELDKVRFDI.

The Mg(2+) site is built by aspartate 46 and aspartate 85. 3-methyl-2-oxobutanoate is bound by residues 46-47 (DS), aspartate 85, and lysine 115. Glutamate 117 lines the Mg(2+) pocket. Glutamate 184 serves as the catalytic Proton acceptor.

The protein belongs to the PanB family. As to quaternary structure, homodecamer; pentamer of dimers. It depends on Mg(2+) as a cofactor.

It localises to the cytoplasm. The enzyme catalyses 3-methyl-2-oxobutanoate + (6R)-5,10-methylene-5,6,7,8-tetrahydrofolate + H2O = 2-dehydropantoate + (6S)-5,6,7,8-tetrahydrofolate. Its pathway is cofactor biosynthesis; (R)-pantothenate biosynthesis; (R)-pantoate from 3-methyl-2-oxobutanoate: step 1/2. Its function is as follows. Catalyzes the reversible reaction in which hydroxymethyl group from 5,10-methylenetetrahydrofolate is transferred onto alpha-ketoisovalerate to form ketopantoate. The protein is 3-methyl-2-oxobutanoate hydroxymethyltransferase of Acetivibrio thermocellus (strain ATCC 27405 / DSM 1237 / JCM 9322 / NBRC 103400 / NCIMB 10682 / NRRL B-4536 / VPI 7372) (Clostridium thermocellum).